A 337-amino-acid chain; its full sequence is Glucokinase (337 aa).

An ATP-binding site is contributed by alanine 11 to threonine 16.

Belongs to the bacterial glucokinase family.

It is found in the cytoplasm. It catalyses the reaction D-glucose + ATP = D-glucose 6-phosphate + ADP + H(+). The protein is Glucokinase of Xylella fastidiosa (strain M23).